The chain runs to 107 residues: Putative double-stranded DNA mimic protein NTHI1680 (107 aa).

The protein belongs to the putative dsDNA mimic protein family.

In terms of biological role, may act as a double-stranded DNA (dsDNA) mimic. Probably regulates the activity of a dsDNA-binding protein. The sequence is that of Putative double-stranded DNA mimic protein NTHI1680 from Haemophilus influenzae (strain 86-028NP).